The chain runs to 988 residues: Isoleucine--tRNA ligase (988 aa).

The short motif at 60-70 (PYANGALHMGH) is the 'HIGH' region element. Residue Glu570 participates in L-isoleucyl-5'-AMP binding. Positions 611–615 (KMSKS) match the 'KMSKS' region motif. Lys614 is a binding site for ATP. Positions 957, 960, 977, and 980 each coordinate Zn(2+).

This sequence belongs to the class-I aminoacyl-tRNA synthetase family. IleS type 1 subfamily. In terms of assembly, monomer. It depends on Zn(2+) as a cofactor.

It localises to the cytoplasm. The catalysed reaction is tRNA(Ile) + L-isoleucine + ATP = L-isoleucyl-tRNA(Ile) + AMP + diphosphate. Its function is as follows. Catalyzes the attachment of isoleucine to tRNA(Ile). As IleRS can inadvertently accommodate and process structurally similar amino acids such as valine, to avoid such errors it has two additional distinct tRNA(Ile)-dependent editing activities. One activity is designated as 'pretransfer' editing and involves the hydrolysis of activated Val-AMP. The other activity is designated 'posttransfer' editing and involves deacylation of mischarged Val-tRNA(Ile). The sequence is that of Isoleucine--tRNA ligase from Synechocystis sp. (strain ATCC 27184 / PCC 6803 / Kazusa).